A 145-amino-acid polypeptide reads, in one-letter code: uncharacterized protein (145 aa).

3 consecutive transmembrane segments (helical) span residues 3–23, 83–103, and 105–125; these read VGIILGILSAMGFLVFLGIGG, YVIDVGYSILFLVTLTLYLVP, and LSLLVWVTFFGATVFMIMLWI.

It localises to the cell membrane. This is an uncharacterized protein from Methanocaldococcus jannaschii (strain ATCC 43067 / DSM 2661 / JAL-1 / JCM 10045 / NBRC 100440) (Methanococcus jannaschii).